Here is a 312-residue protein sequence, read N- to C-terminus: Aquaporin Lacbi1:391485 (312 aa).

Over 1–50 the chain is Cytoplasmic; that stretch reads MDDKFDDDALPNSKTTPEDYGDKLAEYDYTNTFPNTWMRLREPFREYIAE. The chain crosses the membrane as a helical span at residues 51–71; the sequence is FVGVAVLIIFGVGADCQVVLS. Residues 72–89 are Extracellular-facing; the sequence is ANTGVAPSPKGDYLSLNC. Residues 90–110 traverse the membrane as a helical segment; it reads GWAIGTAMGVWISGGISGGHI. An NPA 1 motif is present at residues 111 to 113; that stretch reads NPA. Over 111-128 the chain is Cytoplasmic; that stretch reads NPAVTLALMAWRGFPWWK. Residues 129–149 form a helical membrane-spanning segment; that stretch reads VPGFIFAQLLGGIVGAGLVYV. Topologically, residues 150 to 183 are extracellular; that stretch reads NYIHAIDIVEGGRHIRTLDTAGLFATYAADYMTN. Asn-183 is a glycosylation site (N-linked (GlcNAc...) asparagine). A helical transmembrane segment spans residues 184-204; it reads VSCFFSEFLATAVLIVVIHAM. At 205 to 213 the chain is on the cytoplasmic side; that stretch reads NDKRNAPPP. A helical membrane pass occupies residues 214-234; the sequence is AGLAPLVLFFLILGIGASLGM. Over 235-267 the chain is Extracellular; sequence ETGYAINPARDLGPRMLTAMVGYGRQVFAFRNQ. The short motif at 241-243 is the NPA 2 element; the sequence is NPA. Residues 268–288 form a helical membrane-spanning segment; it reads YWIWCPVIAPFLGAQVGTIFY. Residues 289–312 are Cytoplasmic-facing; it reads DLFFYKGQDNVFGRLGSHIHISPA.

Belongs to the MIP/aquaporin (TC 1.A.8) family.

Its subcellular location is the membrane. It carries out the reaction H2O(in) = H2O(out). The catalysed reaction is glycerol(in) = glycerol(out). It catalyses the reaction NH4(+)(in) = NH4(+)(out). Water channel required to facilitate the transport of water across membranes. In addition to water, also shows strong glycerol and ammonium transport activities. May be involved in fungal nitrogen (ammonium) support of the plant host in symbiosis. Glycerol accumulation has never been observed in ectomycorrhizal (ECM) fungi, therefore, glycerol permeability of Lacbi1:391485 might be a relict of the affiliation of the protein to the group of aquaglyceroporins, and other osmotic active compounds (e.g. trehalose or mannitol) may have taken over glycerol function in ECM fungi. This Laccaria bicolor (strain S238N-H82 / ATCC MYA-4686) (Bicoloured deceiver) protein is Aquaporin Lacbi1:391485.